The chain runs to 376 residues: Fibromodulin (376 aa).

The first 18 residues, 1 to 18 (MQWASILLLAGLCSLSWA), serve as a signal peptide directing secretion. Glutamine 19 is subject to Pyrrolidone carboxylic acid. Tyrosine 20, tyrosine 38, tyrosine 45, tyrosine 47, tyrosine 50, tyrosine 53, tyrosine 55, tyrosine 63, and tyrosine 65 each carry sulfotyrosine. The region spanning 67–105 (SPPQPEPRDCPQECDCPPNFPTAMYCDNRNLKYLPFVPS) is the LRRNT domain. 8 LRR repeats span residues 106 to 127 (RMKY…VFDN), 130 to 151 (GLLW…KKVF), 156 to 176 (HLER…PLPR), 177 to 198 (SLRE…ALEG), 201 to 222 (NLTA…MKGL), 224 to 245 (SLIL…LPSA), 246 to 266 (LEQL…YFRG), and 269 to 289 (KLLY…ASNT). The N-linked (GlcNAc...) (keratan sulfate) asparagine glycan is linked to asparagine 127. N-linked (GlcNAc...) (keratan sulfate) asparagine glycosylation is present at asparagine 166. Asparagine 201 is a glycosylation site (N-linked (GlcNAc...) (keratan sulfate) asparagine). Residue asparagine 291 is glycosylated (N-linked (GlcNAc...) (keratan sulfate) asparagine). 2 LRR repeats span residues 294–315 (SLLE…STNL) and 316–335 (ENLY…SFCT). A disulfide bridge links cysteine 334 with cysteine 367. N-linked (GlcNAc...) asparagine glycosylation is present at asparagine 341. The LRR 11 repeat unit spans residues 344 to 365 (KLQVLRLDGNEIKRSAMPADAP).

The protein belongs to the small leucine-rich proteoglycan (SLRP) family. SLRP class II subfamily. Binds to type I and type II collagen. In terms of processing, binds keratan sulfate chains.

It is found in the secreted. It localises to the extracellular space. Its subcellular location is the extracellular matrix. Its function is as follows. Affects the rate of fibrils formation. May have a primary role in collagen fibrillogenesis. The chain is Fibromodulin (FMOD) from Bos taurus (Bovine).